The primary structure comprises 333 residues: Transcription factor TGA2.2 (333 aa).

Positions 1–14 are enriched in polar residues; it reads MADASSRTDTSTVL. The disordered stretch occupies residues 1-48; it reads MADASSRTDTSTVLDTDDKNQMVDGQSGAIVPSNSSDRSDRSDKPMDQ. The segment covering 37-48 has biased composition (basic and acidic residues); the sequence is DRSDRSDKPMDQ. Residues 47–91 enclose the bZIP domain; it reads DQKVLRRLAQNREAARKSRLRKKAYVQQLESSKLKLASLEQEINK. The segment at 49 to 69 is basic motif; it reads KVLRRLAQNREAARKSRLRKK. Positions 75–89 are leucine-zipper; it reads LESSKLKLASLEQEI. The 217-residue stretch at 114–330 folds into the DOG1 domain; that stretch reads AMTFDLEYAR…RALSSLWLAR (217 aa).

It belongs to the bZIP family. In terms of assembly, interacts with NPR1/NH1. Interacts with NPR3/NH3.

Its subcellular location is the nucleus. In terms of biological role, transcriptional regulator involved in defense response. In Oryza sativa subsp. japonica (Rice), this protein is Transcription factor TGA2.2.